Here is a 192-residue protein sequence, read N- to C-terminus: Thymidine kinase (192 aa).

ATP is bound by residues 9–16 (SAMNAGKS) and 87–90 (DECQ). The active-site Proton acceptor is the E88. 4 residues coordinate Zn(2+): C145, C147, C182, and H185.

Belongs to the thymidine kinase family. Homotetramer.

It localises to the cytoplasm. The enzyme catalyses thymidine + ATP = dTMP + ADP + H(+). In Photobacterium profundum (strain SS9), this protein is Thymidine kinase.